The following is a 1032-amino-acid chain: Kinesin heavy chain isoform 5A (1032 aa).

A2 carries the post-translational modification N-acetylalanine. The 319-residue stretch at 9-327 (SIKVLCRFRP…LMFGQRAKTI (319 aa)) folds into the Kinesin motor domain. Residue 86–93 (GQTSSGKT) participates in ATP binding. Residues 174–315 (VSGPEEILDV…PSSYNDAETK (142 aa)) are microtubule-binding. The tract at residues 271–361 (EGTKSYVPYR…KTKAQKETIA (91 aa)) is necessary for interaction with ZFYVE27. Residues 331–906 (ASVNLELTAE…VDRIKEAVRY (576 aa)) are a coiled coil. Residues 353–1032 (TKAQKETIAK…FPLHQETAAS (680 aa)) are interaction with BICD2. The residue at position 397 (T397) is a Phosphothreonine. Residues 904 to 939 (VRYKSSGKRGHSAQIAKPVRPGHYPASSPTNPYGTR) form a disordered region. The interval 907–1032 (KSSGKRGHSA…FPLHQETAAS (126 aa)) is globular.

The protein belongs to the TRAFAC class myosin-kinesin ATPase superfamily. Kinesin family. Kinesin subfamily. Oligomer composed of two heavy chains and two light chains. Interacts with GRIP1. Interacts with FMR1 (via C-terminus); this interaction is increased in a mGluR-dependent manner. Interacts with BORCS5. Interacts with ZFYVE27. Interacts with VAPA, VAPB, SURF4, RAB11A (GDP-bound form), RAB11B (GDP-bound form) and RTN3 in a ZFYVE27-dependent manner. Interacts with BICD2. Interacts with DTNB.

The protein localises to the cytoplasm. Its subcellular location is the perinuclear region. The protein resides in the cytoskeleton. It localises to the perikaryon. The catalysed reaction is ATP + H2O + a kinesin associated with a microtubule at position (n) = ADP + phosphate a kinesin associated with a microtubule at position (n+1, toward the plus end).. Functionally, microtubule-dependent motor required for slow axonal transport of neurofilament proteins (NFH, NFM and NFL). Can induce formation of neurite-like membrane protrusions in non-neuronal cells in a ZFYVE27-dependent manner. The ZFYVE27-KIF5A complex contributes to the vesicular transport of VAPA, VAPB, SURF4, RAB11A, RAB11B and RTN3 proteins in neurons. Required for anterograde axonal transportation of MAPK8IP3/JIP3 which is essential for MAPK8IP3/JIP3 function in axon elongation. This Pongo abelii (Sumatran orangutan) protein is Kinesin heavy chain isoform 5A (KIF5A).